Consider the following 171-residue polypeptide: Secreted LysM effector Blys4 (171 aa).

The LysM domain maps to 125 to 169 (KPYTIHQGDTCWDIAESHSVGVDDILTLNPELDCDKLSIGSQICL).

The protein belongs to the secreted LysM effector family.

In terms of biological role, might have a role in sequestration of chitin oligosaccharides (breakdown products of fungal cell walls that are released during invasion and act as triggers of host immunity) to dampen host defense. The polypeptide is Secreted LysM effector Blys4 (Beauveria bassiana (strain ARSEF 2860) (White muscardine disease fungus)).